We begin with the raw amino-acid sequence, 142 residues long: Hemoglobin subunit alpha-B (142 aa).

Residues 2 to 142 (PFSASDRHDI…VSETLYSKYR (141 aa)) form the Globin domain. Glutamine 59 contributes to the O2 binding site. Histidine 88 is a binding site for heme b.

The protein belongs to the globin family. Heterotetramer of either two alpha-B chains or two alpha-C chains and two beta chains. The two major hemoglobins, B and C, associate upon deoxygenation to form a trimer of tetramers, BC2, that has a much lower affinity for oxygen than either component alone. As to expression, red blood cells.

The alpha-B chain is a component of adult hemoglobin B. This Aquarana catesbeiana (American bullfrog) protein is Hemoglobin subunit alpha-B.